Reading from the N-terminus, the 585-residue chain is Protein cereblon (585 aa).

Disordered stretches follow at residues 1–109 (MDEE…DLES) and 156–195 (FSQE…IGFD). Polar residues predominate over residues 80-95 (QDDTASEGSHPSSDMS). Positions 158–167 (QERRRSRTSE) are enriched in basic and acidic residues. Pro residues predominate over residues 178 to 189 (VDPPPQQPPRPP). Positions 225–451 (HMLIFLHQHI…LIKSTFKDET (227 aa)) constitute a Lon N-terminal domain. Residues 450–559 (ETLFFCRYCN…LAGSSVRIGK (110 aa)) enclose the CULT domain. Zn(2+) contacts are provided by cysteine 455, cysteine 458, cysteine 524, and cysteine 527.

This sequence belongs to the CRBN family. As to quaternary structure, likely a component of a DCX (DDB1-CUL4-X-box) protein ligase complex. May interact with pic/DDB1. Post-translationally, ubiquitinated. In terms of tissue distribution, expressed in the fat body (at protein level).

It is found in the nucleus. It functions in the pathway protein modification; protein ubiquitination. Functionally, substrate recognition component of a DCX (DDB1-CUL4-X-box) E3 protein ligase complex that mediates the ubiquitination and subsequent proteasomal degradation of target proteins. Has an essential role in mediating growth by negatively regulating insulin signaling. It also has a role in maintaining presynaptic function in the neuromuscular junction synapses of third-instar larvae. The chain is Protein cereblon from Drosophila melanogaster (Fruit fly).